We begin with the raw amino-acid sequence, 953 residues long: Zinc finger protein 618 (953 aa).

The residue at position 1 (Met-1) is an N-acetylmethionine. Residues 1–56 (MSQPDGAAAPQVDGASAPGRKSAVNRERLKRSQKSSKVEGPEPVPAEASLSAEQGT) form a disordered region. Glycyl lysine isopeptide (Lys-Gly) (interchain with G-Cter in SUMO2) cross-links involve residues Lys-63 and Lys-81. 2 C2H2-type zinc fingers span residues 146-168 (YECGICGKKYKYYNCFQTHVRAH) and 187-209 (YTCDICGKKYKYYSCFQEHRDLH). Lys-238 is covalently cross-linked (Glycyl lysine isopeptide (Lys-Gly) (interchain with G-Cter in SUMO2)). A C2H2-type 3 zinc finger spans residues 255-277 (YTCEFCGKQYKYYTPYQEHVALH). 2 disordered regions span residues 283-305 (APGWEPPEDPDTGSECSHPEVTP) and 337-390 (TPPA…SSEP). Residues 339–354 (PATQTQTFRAPNSGSP) are compositionally biased toward polar residues. Basic and acidic residues predominate over residues 365 to 379 (FSRRVESKAQNHFEE). Residues 391–413 (YTCGACGIQFQFYSNLLEHMQSH) form a C2H2-type 4 zinc finger. The span at 419–428 (NNITSNQSRS) shows a compositional bias: polar residues. The segment at 419–461 (NNITSNQSRSPPAAVEEKWKPQAQRNSANNTTTSGLTPNSVIP) is disordered. Residue Lys-436 forms a Glycyl lysine isopeptide (Lys-Gly) (interchain with G-Cter in SUMO2) linkage. The span at 441–458 (AQRNSANNTTTSGLTPNS) shows a compositional bias: polar residues.

The protein belongs to the krueppel C2H2-type zinc-finger protein family. Interacts with UHRF2.

Its subcellular location is the nucleus. The protein resides in the chromosome. In terms of biological role, regulates UHRF2 function as a specific 5-hydroxymethylcytosine (5hmC) reader by regulating its chromatin localization. In Mus musculus (Mouse), this protein is Zinc finger protein 618 (Znf618).